We begin with the raw amino-acid sequence, 314 residues long: Aspartate carbamoyltransferase catalytic subunit (314 aa).

2 residues coordinate carbamoyl phosphate: Arg-55 and Thr-56. L-aspartate is bound at residue Lys-83. Carbamoyl phosphate is bound by residues Arg-105, His-139, and Gln-142. L-aspartate-binding residues include Arg-172 and Arg-226. Residues Gly-267 and Pro-268 each coordinate carbamoyl phosphate.

Belongs to the aspartate/ornithine carbamoyltransferase superfamily. ATCase family. Heterododecamer (2C3:3R2) of six catalytic PyrB chains organized as two trimers (C3), and six regulatory PyrI chains organized as three dimers (R2).

The catalysed reaction is carbamoyl phosphate + L-aspartate = N-carbamoyl-L-aspartate + phosphate + H(+). Its pathway is pyrimidine metabolism; UMP biosynthesis via de novo pathway; (S)-dihydroorotate from bicarbonate: step 2/3. Functionally, catalyzes the condensation of carbamoyl phosphate and aspartate to form carbamoyl aspartate and inorganic phosphate, the committed step in the de novo pyrimidine nucleotide biosynthesis pathway. This chain is Aspartate carbamoyltransferase catalytic subunit, found in Rhodococcus erythropolis (strain PR4 / NBRC 100887).